Consider the following 133-residue polypeptide: Capsid protein (133 aa).

The protein belongs to the Leviviricetes capsid protein family. In terms of assembly, homodimer. The capsid protein dimer binds to the viral RNA via an operator hairpin, but also many other RNA sequences in the viral genome.

It is found in the virion. Its function is as follows. Capsid protein self-assembles to form an icosahedral capsid with a T=3 symmetry, about 26 nm in diameter, and consisting of 89 capsid proteins dimers (178 capsid proteins). Involved in viral genome encapsidation through the interaction between a capsid protein dimer and the multiple packaging signals present in the RNA genome. Binding of the capsid proteins to the viral RNA induces a conformational change required for efficient T=3 shell formation. The capsid also contains 1 copy of the A2 maturation protein. Functionally, acts as a translational repressor of viral replicase synthesis late in infection. This latter function is the result of capsid protein interaction with an RNA hairpin which contains the replicase ribosome-binding site. This Escherichia coli protein is Capsid protein.